The primary structure comprises 336 residues: Dihydroorotate dehydrogenase (quinone) (336 aa).

FMN-binding positions include alanine 62–lysine 66 and threonine 86. Lysine 66 contributes to the substrate binding site. Substrate is bound at residue asparagine 111–phenylalanine 115. Asparagine 139 and asparagine 172 together coordinate FMN. Position 172 (asparagine 172) interacts with substrate. Serine 175 functions as the Nucleophile in the catalytic mechanism. Residue asparagine 177 coordinates substrate. Residues lysine 217 and threonine 245 each contribute to the FMN site. A substrate-binding site is contributed by asparagine 246–threonine 247. Residues glycine 268, glycine 297, and tyrosine 318–serine 319 each bind FMN.

This sequence belongs to the dihydroorotate dehydrogenase family. Type 2 subfamily. As to quaternary structure, monomer. Requires FMN as cofactor.

It is found in the cell membrane. It catalyses the reaction (S)-dihydroorotate + a quinone = orotate + a quinol. Its pathway is pyrimidine metabolism; UMP biosynthesis via de novo pathway; orotate from (S)-dihydroorotate (quinone route): step 1/1. Functionally, catalyzes the conversion of dihydroorotate to orotate with quinone as electron acceptor. The chain is Dihydroorotate dehydrogenase (quinone) from Vibrio vulnificus (strain YJ016).